The chain runs to 78 residues: Large ribosomal subunit protein bL28 (78 aa).

Belongs to the bacterial ribosomal protein bL28 family.

This is Large ribosomal subunit protein bL28 from Acaryochloris marina (strain MBIC 11017).